The sequence spans 316 residues: Annexin A13 (316 aa).

Gly-2 is lipidated: N-myristoyl glycine. 4 Annexin repeats span residues 14–85 (FDVD…ALLD), 86–157 (RPSE…SLLQ), 169–241 (DLAG…TLVR), and 245–316 (DQEG…ALLH).

This sequence belongs to the annexin family. Monomer and homodimer. In terms of tissue distribution, detected in intestine, and at much lower levels also in kidney (at protein level).

It localises to the apical cell membrane. The protein localises to the cell membrane. The protein resides in the cytoplasmic vesicle. Its function is as follows. Binds to membranes enriched in phosphatidylserine or phosphatidylglycerol in a calcium-dependent manner. Half-maximal membrane binding requires about 60 uM calcium. Does not bind to membranes that lack phospholipids with an acidic headgroup. Functionally, binds to membranes enriched in phosphatidylserine or phosphatidylglycerol in a calcium-dependent manner, but requires higher calcium levels for membrane binding than isoform A. Half-maximal membrane binding requires about 320 uM calcium. May play a role in vesicular traffic to the apical plasma membrane. This Canis lupus familiaris (Dog) protein is Annexin A13 (ANXA13).